Here is a 164-residue protein sequence, read N- to C-terminus: Phosphopantetheine adenylyltransferase (164 aa).

Ser9 is a substrate binding site. ATP-binding positions include 9-10 (SF) and His17. Positions 41, 73, and 87 each coordinate substrate. Residues 88-90 (GLR), Glu98, and 123-129 (HSFLSSS) each bind ATP.

It belongs to the bacterial CoaD family. As to quaternary structure, homohexamer. The cofactor is Mg(2+).

The protein localises to the cytoplasm. The catalysed reaction is (R)-4'-phosphopantetheine + ATP + H(+) = 3'-dephospho-CoA + diphosphate. It participates in cofactor biosynthesis; coenzyme A biosynthesis; CoA from (R)-pantothenate: step 4/5. Its function is as follows. Reversibly transfers an adenylyl group from ATP to 4'-phosphopantetheine, yielding dephospho-CoA (dPCoA) and pyrophosphate. The polypeptide is Phosphopantetheine adenylyltransferase (Rubrobacter xylanophilus (strain DSM 9941 / JCM 11954 / NBRC 16129 / PRD-1)).